The sequence spans 245 residues: Ubiquinone biosynthesis O-methyltransferase (245 aa).

Positions 44, 64, 85, and 129 each coordinate S-adenosyl-L-methionine.

It belongs to the methyltransferase superfamily. UbiG/COQ3 family.

It carries out the reaction a 3-demethylubiquinol + S-adenosyl-L-methionine = a ubiquinol + S-adenosyl-L-homocysteine + H(+). The catalysed reaction is a 3-(all-trans-polyprenyl)benzene-1,2-diol + S-adenosyl-L-methionine = a 2-methoxy-6-(all-trans-polyprenyl)phenol + S-adenosyl-L-homocysteine + H(+). It participates in cofactor biosynthesis; ubiquinone biosynthesis. In terms of biological role, O-methyltransferase that catalyzes the 2 O-methylation steps in the ubiquinone biosynthetic pathway. The polypeptide is Ubiquinone biosynthesis O-methyltransferase (Proteus mirabilis (strain HI4320)).